A 187-amino-acid polypeptide reads, in one-letter code: Biogenesis of lysosome-related organelles complex 1 subunit 5 (187 aa).

The segment at 1–27 is disordered; that stretch reads MSGGGTETPVACEAAQGGGGKKRDSLG. Serine 2 carries the N-acetylserine modification.

The protein belongs to the BLOC1S5 family. Octamer composed of one copy each BLOC1S1, BLOC1S2, BLOC1S3, BLOC1S4, BLOC1S5, BLOC1S6, DTNBP1/BLOC1S7 and SNAPIN/BLOC1S8. The BLOC-1 complex associates with the AP-3 protein complex and membrane protein cargos. Interacts with BLOC1S4, BLOC1S6, DTNBP1/BLOC1S7 and PI4K2A. Component of the biogenesis of lysosome-related organelles complex 1 (BLOC-1) composed of BLOC1S1, BLOC1S2, BLOC1S3, BLOC1S4, BLOC1S5, BLOC1S6, DTNBP1/BLOC1S7 and SNAPIN/BLOC1S8.

Component of the BLOC-1 complex, a complex that is required for normal biogenesis of lysosome-related organelles (LRO), such as platelet dense granules and melanosomes. In concert with the AP-3 complex, the BLOC-1 complex is required to target membrane protein cargos into vesicles assembled at cell bodies for delivery into neurites and nerve terminals. The BLOC-1 complex, in association with SNARE proteins, is also proposed to be involved in neurite extension. Plays a role in intracellular vesicle trafficking. This Rattus norvegicus (Rat) protein is Biogenesis of lysosome-related organelles complex 1 subunit 5 (Bloc1s5).